The following is a 109-amino-acid chain: Staphostatin B (109 aa).

The interval 97 to 101 is binds to staphopain B; that stretch reads IGTSR.

This sequence belongs to the protease inhibitor I57 (SspC) family. In terms of assembly, forms a stable non-covalent complex with prematurely activated/folded SspB.

It localises to the cytoplasm. Specifically inhibits the cysteine protease staphopain B (SspB) by blocking the active site of the enzyme. Probably required to protect cytoplasmic proteins from being degraded by prematurely activated/folded prostaphopain B. Also involved in growth capacity, viability and bacterial morphology. The polypeptide is Staphostatin B (sspC) (Staphylococcus aureus (strain NCTC 8325 / PS 47)).